The primary structure comprises 372 residues: Fork head domain-containing protein FD4 (372 aa).

The fork-head DNA-binding region spans 12-103 (QKPPYSYISL…FDMFENGSLL (92 aa)). Disordered regions lie at residues 225 to 245 (ESLI…DEDD) and 261 to 281 (PTTP…RTED).

Expressed in early embryogenesis in 14 symmetrical pairs of segmentally arranged neuroblasts. Also, later in embryogenesis, in a cluster of cells in head region.

Its subcellular location is the nucleus. Involved in development during embryogenesis. The protein is Fork head domain-containing protein FD4 (fd96Ca) of Drosophila melanogaster (Fruit fly).